Here is a 429-residue protein sequence, read N- to C-terminus: Phosphoribosylamine--glycine ligase (429 aa).

An ATP-grasp domain is found at 109 to 316; that stretch reads KDFLARHQIP…LVDLCLAACD (208 aa). 135–196 provides a ligand contact to ATP; sequence LREKGAPIVI…EEFLDGEEAS (62 aa). 2 residues coordinate Mg(2+): Glu-286 and Asn-288.

This sequence belongs to the GARS family. In terms of assembly, monomer. It depends on Mg(2+) as a cofactor. The cofactor is Mn(2+).

It carries out the reaction 5-phospho-beta-D-ribosylamine + glycine + ATP = N(1)-(5-phospho-beta-D-ribosyl)glycinamide + ADP + phosphate + H(+). It functions in the pathway purine metabolism; IMP biosynthesis via de novo pathway; N(1)-(5-phospho-D-ribosyl)glycinamide from 5-phospho-alpha-D-ribose 1-diphosphate: step 2/2. In Salmonella typhimurium (strain LT2 / SGSC1412 / ATCC 700720), this protein is Phosphoribosylamine--glycine ligase.